Reading from the N-terminus, the 581-residue chain is 2-succinyl-5-enolpyruvyl-6-hydroxy-3-cyclohexene-1-carboxylate synthase (581 aa).

The protein belongs to the TPP enzyme family. MenD subfamily. Homodimer. The cofactor is Mg(2+). It depends on Mn(2+) as a cofactor. Thiamine diphosphate serves as cofactor.

It carries out the reaction isochorismate + 2-oxoglutarate + H(+) = 5-enolpyruvoyl-6-hydroxy-2-succinyl-cyclohex-3-ene-1-carboxylate + CO2. It functions in the pathway quinol/quinone metabolism; 1,4-dihydroxy-2-naphthoate biosynthesis; 1,4-dihydroxy-2-naphthoate from chorismate: step 2/7. Its pathway is cofactor biosynthesis; phylloquinone biosynthesis. Catalyzes the thiamine diphosphate-dependent decarboxylation of 2-oxoglutarate and the subsequent addition of the resulting succinic semialdehyde-thiamine pyrophosphate anion to isochorismate to yield 2-succinyl-5-enolpyruvyl-6-hydroxy-3-cyclohexene-1-carboxylate (SEPHCHC). The chain is 2-succinyl-5-enolpyruvyl-6-hydroxy-3-cyclohexene-1-carboxylate synthase from Gloeothece citriformis (strain PCC 7424) (Cyanothece sp. (strain PCC 7424)).